The chain runs to 464 residues: Phospho-cellobiase (464 aa).

Glutamate 172 functions as the Proton donor in the catalytic mechanism. Catalysis depends on glutamate 361, which acts as the Nucleophile.

It belongs to the glycosyl hydrolase 1 family.

The polypeptide is Phospho-cellobiase (casB) (Klebsiella oxytoca).